The sequence spans 432 residues: Adenosylhomocysteinase (432 aa).

3 residues coordinate substrate: Thr56, Asp131, and Glu156. 157-159 (TTT) is an NAD(+) binding site. 2 residues coordinate substrate: Lys186 and Asp190. Residues Asn191, 222–227 (GDVGKG), Glu243, 299–301 (IGH), and Asn346 contribute to the NAD(+) site.

This sequence belongs to the adenosylhomocysteinase family. It depends on NAD(+) as a cofactor.

It carries out the reaction S-adenosyl-L-homocysteine + H2O = L-homocysteine + adenosine. Its pathway is amino-acid biosynthesis; L-homocysteine biosynthesis; L-homocysteine from S-adenosyl-L-homocysteine: step 1/1. Its function is as follows. Adenosylhomocysteine is a competitive inhibitor of S-adenosyl-L-methionine-dependent methyl transferase reactions; therefore adenosylhomocysteinase may play a key role in the control of methylations via regulation of the intracellular concentration of adenosylhomocysteine. This chain is Adenosylhomocysteinase (Ahcy13), found in Anopheles gambiae (African malaria mosquito).